Consider the following 261-residue polypeptide: 5'-nucleotidase SurE (261 aa).

Residues aspartate 8, aspartate 9, serine 39, and asparagine 94 each coordinate a divalent metal cation.

This sequence belongs to the SurE nucleotidase family. It depends on a divalent metal cation as a cofactor.

It is found in the cytoplasm. It carries out the reaction a ribonucleoside 5'-phosphate + H2O = a ribonucleoside + phosphate. In terms of biological role, nucleotidase that shows phosphatase activity on nucleoside 5'-monophosphates. This chain is 5'-nucleotidase SurE, found in Methanopyrus kandleri (strain AV19 / DSM 6324 / JCM 9639 / NBRC 100938).